We begin with the raw amino-acid sequence, 328 residues long: DNA-directed RNA polymerase subunit alpha (328 aa).

The segment at Met-1–Arg-235 is alpha N-terminal domain (alpha-NTD). Positions Phe-249–Glu-328 are alpha C-terminal domain (alpha-CTD).

This sequence belongs to the RNA polymerase alpha chain family. As to quaternary structure, homodimer. The RNAP catalytic core consists of 2 alpha, 1 beta, 1 beta' and 1 omega subunit. When a sigma factor is associated with the core the holoenzyme is formed, which can initiate transcription.

The enzyme catalyses RNA(n) + a ribonucleoside 5'-triphosphate = RNA(n+1) + diphosphate. Its function is as follows. DNA-dependent RNA polymerase catalyzes the transcription of DNA into RNA using the four ribonucleoside triphosphates as substrates. In Pseudoalteromonas translucida (strain TAC 125), this protein is DNA-directed RNA polymerase subunit alpha.